A 96-amino-acid polypeptide reads, in one-letter code: Co-chaperonin GroES (96 aa).

The protein belongs to the GroES chaperonin family. In terms of assembly, heptamer of 7 subunits arranged in a ring. Interacts with the chaperonin GroEL.

The protein resides in the cytoplasm. In terms of biological role, together with the chaperonin GroEL, plays an essential role in assisting protein folding. The GroEL-GroES system forms a nano-cage that allows encapsulation of the non-native substrate proteins and provides a physical environment optimized to promote and accelerate protein folding. GroES binds to the apical surface of the GroEL ring, thereby capping the opening of the GroEL channel. This is Co-chaperonin GroES from Cupriavidus necator (strain ATCC 17699 / DSM 428 / KCTC 22496 / NCIMB 10442 / H16 / Stanier 337) (Ralstonia eutropha).